A 211-amino-acid chain; its full sequence is Uridine kinase (211 aa).

12–19 (GGSGSGKT) is an ATP binding site.

Belongs to the uridine kinase family.

The protein localises to the cytoplasm. The enzyme catalyses uridine + ATP = UMP + ADP + H(+). The catalysed reaction is cytidine + ATP = CMP + ADP + H(+). The protein operates within pyrimidine metabolism; CTP biosynthesis via salvage pathway; CTP from cytidine: step 1/3. It functions in the pathway pyrimidine metabolism; UMP biosynthesis via salvage pathway; UMP from uridine: step 1/1. The protein is Uridine kinase of Anoxybacillus flavithermus (strain DSM 21510 / WK1).